We begin with the raw amino-acid sequence, 220 residues long: Fructose-6-phosphate aldolase (220 aa).

The active-site Schiff-base intermediate with substrate is the Lys85.

It belongs to the transaldolase family. Type 3A subfamily. Homodecamer.

Its subcellular location is the cytoplasm. It carries out the reaction beta-D-fructose 6-phosphate = dihydroxyacetone + D-glyceraldehyde 3-phosphate. In terms of biological role, catalyzes the reversible formation of fructose 6-phosphate from dihydroxyacetone and D-glyceraldehyde 3-phosphate via an aldolization reaction. The polypeptide is Fructose-6-phosphate aldolase (Salmonella heidelberg (strain SL476)).